Reading from the N-terminus, the 203-residue chain is Protein-methionine-sulfoxide reductase heme-binding subunit MsrQ (203 aa).

A run of 6 helical transmembrane segments spans residues I10–L30, L42–L62, L75–L95, P110–N130, L147–L167, and E169–A189.

This sequence belongs to the MsrQ family. Heterodimer of a catalytic subunit (MsrP) and a heme-binding subunit (MsrQ). Requires FMN as cofactor. Heme b is required as a cofactor.

The protein localises to the cell inner membrane. In terms of biological role, part of the MsrPQ system that repairs oxidized periplasmic proteins containing methionine sulfoxide residues (Met-O), using respiratory chain electrons. Thus protects these proteins from oxidative-stress damage caused by reactive species of oxygen and chlorine generated by the host defense mechanisms. MsrPQ is essential for the maintenance of envelope integrity under bleach stress, rescuing a wide series of structurally unrelated periplasmic proteins from methionine oxidation. MsrQ provides electrons for reduction to the reductase catalytic subunit MsrP, using the quinone pool of the respiratory chain. This Pseudomonas putida (strain GB-1) protein is Protein-methionine-sulfoxide reductase heme-binding subunit MsrQ.